The sequence spans 797 residues: Ent-atiserene synthase KSL1, chloroplastic (797 aa).

The transit peptide at 1–48 directs the protein to the chloroplast; the sequence is LVKDDMSLILSSFSLFRSSRSSPASASLAGSGHPRTTPPKIASLQSPM. Low complexity predominate over residues 21–32; the sequence is SSPASASLAGSG. The interval 21–47 is disordered; sequence SSPASASLAGSGHPRTTPPKIASLQSP. Mg(2+)-binding residues include D547, D551, N691, and E699. Residues 547–551 carry the DDXXD motif motif; it reads DDLFD.

It belongs to the terpene synthase family. It depends on Mg(2+) as a cofactor.

The protein localises to the plastid. Its subcellular location is the chloroplast. It catalyses the reaction ent-copalyl diphosphate = ent-atiserene + diphosphate. It functions in the pathway secondary metabolite biosynthesis; terpenoid biosynthesis. In terms of biological role, involved in the biosynthesis of ent-kaurene diterpenoids natural products such as oridonin, miltiradiene, eriocalyxin B and nezukol, known to exhibit antitumor, anti-inflammatory and antibacterial activities. Catalyzes the conversion of ent-copalyl diphosphate (ent-CPP) to ent-atiserene. The chain is Ent-atiserene synthase KSL1, chloroplastic from Isodon japonicus (Scutellaria japonica).